The primary structure comprises 671 residues: Anti-sigma-I factor RsgI2 (671 aa).

Over 1–57 the chain is Cytoplasmic; it reads MSHYTGIILKLESDRAIVLTDGLDFMELKLKPGMQRGQHVIFDESDLYSAGLITRYK. The 48-residue stretch at 4-51 folds into the RsgI N-terminal anti-sigma domain; the sequence is YTGIILKLESDRAIVLTDGLDFMELKLKPGMQRGQHVIFDESDLYSAG. A helical transmembrane segment spans residues 58 to 78; the sequence is SIIMPFSAFAAAAAVFLVILF. Residues 79–671 are Extracellular-facing; sequence SLRFVSISQE…SGTLYWGIEP (593 aa). 2 disordered regions span residues 290–323 and 359–505; these read TEAQ…IPHT and PVPV…APTE. Residues 359-379 show a composition bias toward low complexity; the sequence is PVPVSTPKPVSTPAYSSTPTP. A compositionally biased stretch (pro residues) spans 380–400; that stretch reads ESTPVPVSTPKPASTPTPAST. Over residues 401 to 425 the composition is skewed to low complexity; the sequence is PKPVSTPTHVSTPKPISTPTSTPRP. Over residues 426-446 the composition is skewed to pro residues; the sequence is ASTPKPTSTPTPESTPKPTST. Residues 447–491 show a composition bias toward low complexity; that stretch reads PAPVSTPTSTPIPTYTSTPASTPIPAYTSTPTSIPTLTPATSPAP. Residues 492-502 show a composition bias toward pro residues; it reads TSSPTPIPSPA. Residues 508–671 enclose the CBM3 domain; sequence LLTKIELQAY…SGTLYWGIEP (164 aa). Ca(2+) contacts are provided by threonine 554, aspartate 556, aspartate 637, serine 640, and aspartate 641.

Interacts (via RsgI N-terminal anti-sigma domain) with SigI2.

Its subcellular location is the cell membrane. Anti-sigma factor for SigI2. Negatively regulates SigI2 activity through direct interaction. Binding of the polysaccharide substrate to the extracellular C-terminal sensing domain of RsgI2 may induce a conformational change in its N-terminal cytoplasmic region, leading to the release and activation of SigI2. In Acetivibrio thermocellus (strain ATCC 27405 / DSM 1237 / JCM 9322 / NBRC 103400 / NCIMB 10682 / NRRL B-4536 / VPI 7372) (Clostridium thermocellum), this protein is Anti-sigma-I factor RsgI2.